A 146-amino-acid chain; its full sequence is Meiotically up-regulated gene 151 protein (146 aa).

Residues 1–40 form a disordered region; that stretch reads MSLVAYDSEEEEQTSLVNENNDIKGRSEEPHWKIPNSPKA. Over residues 21 to 32 the composition is skewed to basic and acidic residues; sequence NDIKGRSEEPHW.

Its subcellular location is the nucleus. Has a role in meiosis. In Schizosaccharomyces pombe (strain 972 / ATCC 24843) (Fission yeast), this protein is Meiotically up-regulated gene 151 protein (mug151).